Reading from the N-terminus, the 508-residue chain is MKKKNIYSIRKLGVGIASVTLGTLLISGGVTPAANAAQHDEAQQNAFYQVLNMPNLNADQRNGFIQSLKDDPSQSANVLGEAQKLNDSQAPKADAQQNNFNKDQQSAFYEILNMPNLNEAQRNGFIQSLKDDPSQSTNVLGEAKKLNESQAPKADNNFNKEQQNAFYEILNMPNLNEEQRNGFIQSLKDDPSQSANLLSEAKKLNESQAPKADNKFNKEQQNAFYEILHLPNLNEEQRNGFIQSLKDDPSQSANLLAEAKKLNDAQAPKADNKFNKEQQNAFYEILHLPNLTEEQRNGFIQSLKDDPSVSKEILAEAKKLNDAQAPKEEDNNKPGKEDNNKPGKEDNNKPGKEDNNKPGKEDGNKPGKEDNKKPGKEDGNKPGKEDNKKPGKEDGNKPGKEDGNKPGKEDGNGVHVVKPGDTVNDIAKANGTTADKIAADNKLADKNMIKPGQELVVDKKQPANHADANKAQALPETGEENPFIGTTVFGGLSLALGAALLAGRRREL.

A signal peptide spans 1–36 (MKKKNIYSIRKLGVGIASVTLGTLLISGGVTPAANA). The YSIRK-G/S signaling motif motif lies at 7-18 (YSIRKLGVGIAS). The Immunoglobulin-binding region E repeat unit spans residues 37–92 (AQHDEAQQNAFYQVLNMPNLNADQRNGFIQSLKDDPSQSANVLGEAQKLNDSQAPK). One copy of the Immunoglobulin-binding region D repeat lies at 93–153 (ADAQQNNFNK…KKLNESQAPK (61 aa)). The stretch at 154–211 (ADNNFNKEQQNAFYEILNMPNLNEEQRNGFIQSLKDDPSQSANLLSEAKKLNESQAPK) is one Immunoglobulin-binding region A repeat. Residues 212–269 (ADNKFNKEQQNAFYEILHLPNLNEEQRNGFIQSLKDDPSQSANLLAEAKKLNDAQAPK) form an Immunoglobulin-binding region B repeat. One copy of the Immunoglobulin-binding region C repeat lies at 270-327 (ADNKFNKEQQNAFYEILHLPNLTEEQRNGFIQSLKDDPSVSKEILAEAKKLNDAQAPK). Over residues 318–412 (KKLNDAQAPK…GNKPGKEDGN (95 aa)) the composition is skewed to basic and acidic residues. 2 disordered regions span residues 318–421 (KKLN…KPGD) and 459–479 (KKQPANHADANKAQALPETGE). Repeat copies occupy residues 333 to 340 (KPGKEDNN), 341 to 348 (KPGKEDNN), 349 to 356 (KPGKEDNN), 357 to 364 (KPGKEDGN), 365 to 372 (KPGKEDNK), 373 to 380 (KPGKEDGN), 381 to 388 (KPGKEDNK), 389 to 396 (KPGKEDGN), 397 to 404 (KPGKEDGN), and 405 to 412 (KPGKEDGN). A 10 X 8 AA approximate tandem repeats region spans residues 333–412 (KPGKEDNNKP…GNKPGKEDGN (80 aa)). The LysM domain occupies 413–457 (GVHVVKPGDTVNDIAKANGTTADKIAADNKLADKNMIKPGQELVV). Positions 474–478 (LPETG) match the LPXTG sorting signal motif. Threonine 477 is modified (pentaglycyl murein peptidoglycan amidated threonine). Residues 478 to 508 (GEENPFIGTTVFGGLSLALGAALLAGRRREL) constitute a propeptide, removed by sortase.

The protein belongs to the immunoglobulin-binding protein SpA family. As to quaternary structure, interacts with host TNFRSF1A; this interaction leads to the stimulation of both surface expression and shedding of TNFRSF1A.

The protein resides in the secreted. The protein localises to the cell wall. In terms of biological role, plays a role in the inhibition of the host innate and adaptive immune responses. Possesses five immunoglobulin-binding domains that capture both the fragment crystallizable region (Fc region) and the Fab region (part of Ig that identifies antigen) of immunoglobulins. In turn, Staphylococcus aureus is protected from phagocytic killing via inhibition of Ig Fc region. In addition, the host elicited B-cell response is prevented due to a decrease of antibody-secreting cell proliferation that enter the bone marrow, thereby decreasing long-term antibody production. Inhibits osteogenesis by preventing osteoblast proliferation and expression of alkaline phosphatase, type I collagen, osteopontin and osteocalcin. Acts directly as a pro-inflammatory factor in the lung through its ability to bind and activate tumor necrosis factor alpha receptor 1/TNFRSF1A. This chain is Immunoglobulin G-binding protein A (spa), found in Staphylococcus aureus (strain Newman).